We begin with the raw amino-acid sequence, 477 residues long: Maternal protein exuperantia-2 (477 aa).

A compositionally biased stretch (basic and acidic residues) spans 196-209 (KDGNSTKEDEHENP). Disordered stretches follow at residues 196–226 (KDGN…NQKQ) and 384–477 (TIKP…FADI). The span at 385 to 402 (IKPRCKRSGNGTRRRNRA) shows a compositional bias: basic residues.

In terms of biological role, ensures the proper localization of the mRNA of the bicoid gene to the anterior regions of the oocyte thus playing a fundamental role in the establishment of the polarity of the oocyte. May bind the bcd mRNA. This is Maternal protein exuperantia-2 (exu2) from Drosophila pseudoobscura pseudoobscura (Fruit fly).